We begin with the raw amino-acid sequence, 658 residues long: Phosphomethylpyrimidine synthase (658 aa).

The segment at 1 to 22 (MNNSTDAVNPAKKPQTRREKRE) is disordered. Substrate-binding positions include Asn248, Met277, Tyr306, His342, 362–364 (SRG), 403–406 (DGLR), and Glu442. His446 is a Zn(2+) binding site. Residue Tyr469 participates in substrate binding. Residue His510 coordinates Zn(2+). [4Fe-4S] cluster is bound by residues Cys590, Cys593, and Cys598.

The protein belongs to the ThiC family. As to quaternary structure, homodimer. Requires [4Fe-4S] cluster as cofactor.

The catalysed reaction is 5-amino-1-(5-phospho-beta-D-ribosyl)imidazole + S-adenosyl-L-methionine = 4-amino-2-methyl-5-(phosphooxymethyl)pyrimidine + CO + 5'-deoxyadenosine + formate + L-methionine + 3 H(+). The protein operates within cofactor biosynthesis; thiamine diphosphate biosynthesis. Catalyzes the synthesis of the hydroxymethylpyrimidine phosphate (HMP-P) moiety of thiamine from aminoimidazole ribotide (AIR) in a radical S-adenosyl-L-methionine (SAM)-dependent reaction. The protein is Phosphomethylpyrimidine synthase of Colwellia psychrerythraea (strain 34H / ATCC BAA-681) (Vibrio psychroerythus).